Reading from the N-terminus, the 148-residue chain is SsrA-binding protein (148 aa).

A disordered region spans residues 123-148 (KLHDKRETEKKRDWEREKARIMRSAT). The span at 126–142 (DKRETEKKRDWEREKAR) shows a compositional bias: basic and acidic residues.

Belongs to the SmpB family.

The protein resides in the cytoplasm. Its function is as follows. Required for rescue of stalled ribosomes mediated by trans-translation. Binds to transfer-messenger RNA (tmRNA), required for stable association of tmRNA with ribosomes. tmRNA and SmpB together mimic tRNA shape, replacing the anticodon stem-loop with SmpB. tmRNA is encoded by the ssrA gene; the 2 termini fold to resemble tRNA(Ala) and it encodes a 'tag peptide', a short internal open reading frame. During trans-translation Ala-aminoacylated tmRNA acts like a tRNA, entering the A-site of stalled ribosomes, displacing the stalled mRNA. The ribosome then switches to translate the ORF on the tmRNA; the nascent peptide is terminated with the 'tag peptide' encoded by the tmRNA and targeted for degradation. The ribosome is freed to recommence translation, which seems to be the essential function of trans-translation. This chain is SsrA-binding protein, found in Burkholderia thailandensis (strain ATCC 700388 / DSM 13276 / CCUG 48851 / CIP 106301 / E264).